A 49-amino-acid polypeptide reads, in one-letter code: uncharacterized protein (49 aa).

A signal peptide spans 1 to 22; that stretch reads MKLNAFHLVVVVLIVSIFSVSS.

It is found in the secreted. This is an uncharacterized protein from Dictyostelium discoideum (Social amoeba).